Here is a 425-residue protein sequence, read N- to C-terminus: Histidine--tRNA ligase (425 aa).

Belongs to the class-II aminoacyl-tRNA synthetase family. In terms of assembly, homodimer.

Its subcellular location is the cytoplasm. It catalyses the reaction tRNA(His) + L-histidine + ATP = L-histidyl-tRNA(His) + AMP + diphosphate + H(+). This chain is Histidine--tRNA ligase, found in Listeria monocytogenes serovar 1/2a (strain ATCC BAA-679 / EGD-e).